A 123-amino-acid polypeptide reads, in one-letter code: MIQEQTMLDVADNSGARSVMCIKVLGGSHRRYAAIGDIIKITVKEAIPRGKVKKGDVLKAVVVRTKKGVRRPDGSVIRFDGNACVILNNNTEQPIGTRIFGPVTRELRSEKFMKIISLAPEVL.

The protein belongs to the universal ribosomal protein uL14 family. In terms of assembly, part of the 50S ribosomal subunit. Forms a cluster with proteins L3 and L19. In the 70S ribosome, L14 and L19 interact and together make contacts with the 16S rRNA in bridges B5 and B8.

Its function is as follows. Binds to 23S rRNA. Forms part of two intersubunit bridges in the 70S ribosome. This chain is Large ribosomal subunit protein uL14, found in Actinobacillus succinogenes (strain ATCC 55618 / DSM 22257 / CCUG 43843 / 130Z).